The primary structure comprises 837 residues: Semaphorin-4G (837 aa).

Residues 1-17 form the signal peptide; sequence MWGRLWPLLFSFLTVTA. Residues 18 to 673 lie on the Extracellular side of the membrane; it reads VPGPSLRRPS…GAQLAHDMRM (656 aa). Residues 35-503 form the Sema domain; the sequence is RLTISYEELS…AASGVLQFPL (469 aa). N-linked (GlcNAc...) asparagine glycosylation is found at asparagine 55, asparagine 111, and asparagine 126. Cysteine 104 and cysteine 115 are oxidised to a cystine. 3 cysteine pairs are disulfide-bonded: cysteine 133-cysteine 142, cysteine 268-cysteine 375, and cysteine 292-cysteine 335. The N-linked (GlcNAc...) asparagine glycan is linked to asparagine 386. The region spanning 505–556 is the PSI domain; the sequence is SCSRYQSCYDCILARDPYCGWDSSIHACMVATTVANRTELIQDIERGNRGCE. 2 cysteine pairs are disulfide-bonded: cysteine 506–cysteine 523 and cysteine 515–cysteine 532. Asparagine 540 and asparagine 596 each carry an N-linked (GlcNAc...) asparagine glycan. The region spanning 565–647 is the Ig-like C2-type domain; it reads PPLKTRSVLR…RMLLASYSLT (83 aa). Cysteine 582 and cysteine 630 are disulfide-bonded. Residues 674–694 traverse the membrane as a helical segment; the sequence is FYVVAIAILGGLCLILASSLL. Over 695 to 837 the chain is Cytoplasmic; sequence YVACLKGGRR…LVEQLDESSV (143 aa). The tract at residues 721–776 is disordered; sequence SAVQLQTVSGQCPGEEDEGDDGEGTGGLESGCLQIIPGEGAPAPPPPPPPPPPAEL. Over residues 734–743 the composition is skewed to acidic residues; it reads GEEDEGDDGE. Residues 762–774 are compositionally biased toward pro residues; the sequence is PAPPPPPPPPPPA. Serine 794 and serine 836 each carry phosphoserine.

It belongs to the semaphorin family. As to quaternary structure, interacts with PLXNB2. In terms of tissue distribution, brain, spinal cord, and several sensory organs as well as specific populations of projection neurons.

Its subcellular location is the cell membrane. Cell surface receptor for PLXNB2. May play a role in axon guidance. In Mus musculus (Mouse), this protein is Semaphorin-4G (Sema4g).